A 328-amino-acid polypeptide reads, in one-letter code: uncharacterized protein (328 aa).

The interval methionine 1–arginine 22 is disordered. Over residues arginine 9 to serine 21 the composition is skewed to polar residues. A run of 6 helical transmembrane segments spans residues phenylalanine 66–leucine 86, threonine 126–leucine 146, phenylalanine 176–alanine 196, leucine 221–valine 241, glycine 255–proline 275, and isoleucine 290–isoleucine 310.

It to E.coli YhjD.

Its subcellular location is the cell inner membrane. This is an uncharacterized protein from Dickeya dadantii (strain 3937) (Erwinia chrysanthemi (strain 3937)).